The chain runs to 180 residues: ATP-dependent protease subunit HslV (180 aa).

Thr5 is a catalytic residue. Na(+) contacts are provided by Gly165, Cys168, and Thr171.

This sequence belongs to the peptidase T1B family. HslV subfamily. In terms of assembly, a double ring-shaped homohexamer of HslV is capped on each side by a ring-shaped HslU homohexamer. The assembly of the HslU/HslV complex is dependent on binding of ATP.

Its subcellular location is the cytoplasm. The catalysed reaction is ATP-dependent cleavage of peptide bonds with broad specificity.. Allosterically activated by HslU binding. Its function is as follows. Protease subunit of a proteasome-like degradation complex believed to be a general protein degrading machinery. The protein is ATP-dependent protease subunit HslV of Helicobacter acinonychis (strain Sheeba).